The primary structure comprises 527 residues: Bifunctional dihydrofolate reductase-thymidylate synthase (527 aa).

The DHFR domain maps to 28–238 (PFSVVVASDE…KKYQFEKLVP (211 aa)). Residue V32 participates in substrate binding. Residues A34 and 40–46 (GIGDGGT) each bind NADP(+). D54 is a binding site for substrate. NADP(+)-binding positions include 84–86 (RKT) and 105–108 (LSRS). Substrate contacts are provided by I160, Y166, and T184. 161-168 (GGGTIYKQ) provides a ligand contact to NADP(+). Residues 243 to 527 (EEQYLNLVGR…YPVISMEMAV (285 aa)) form a thymidylate synthase region. DUMP is bound at residue R263. The active site involves C409. Residues H410, 428-432 (QRSCD), N440, and 470-472 (HVY) contribute to the dUMP site.

This sequence in the N-terminal section; belongs to the dihydrofolate reductase family. In the C-terminal section; belongs to the thymidylate synthase family. In terms of assembly, homodimer.

It catalyses the reaction dUMP + (6R)-5,10-methylene-5,6,7,8-tetrahydrofolate = 7,8-dihydrofolate + dTMP. The catalysed reaction is (6S)-5,6,7,8-tetrahydrofolate + NADP(+) = 7,8-dihydrofolate + NADPH + H(+). It functions in the pathway pyrimidine metabolism; dTTP biosynthesis. It participates in cofactor biosynthesis; tetrahydrofolate biosynthesis; 5,6,7,8-tetrahydrofolate from 7,8-dihydrofolate: step 1/1. Its function is as follows. Bifunctional enzyme. Involved in de novo dTMP biosynthesis. Key enzyme in folate metabolism. Catalyzes an essential reaction for de novo glycine and purine synthesis, DNA precursor synthesis, and for the conversion of dUMP to dTMP. This chain is Bifunctional dihydrofolate reductase-thymidylate synthase, found in Trypanosoma brucei brucei.